The following is a 647-amino-acid chain: Paraneoplastic antigen Ma6E (647 aa).

4 disordered regions span residues 111–199 (QPQG…AGGA), 227–254 (GAAG…RAAG), 508–580 (AAAP…VPWG), and 608–647 (RGQE…SQGK). 3 stretches are compositionally biased toward gly residues: residues 122–149 (GEGG…GEAG), 158–199 (GEAG…AGGA), and 227–251 (GAAG…GEGR). The span at 517-570 (PAAAQASPAQGNASEAGPGAEDAAEAASATKEAARGAPAAGEGESAPAGPEGLG) shows a compositional bias: low complexity. Over residues 625–636 (EEPENEDEDGAG) the composition is skewed to acidic residues.

In Homo sapiens (Human), this protein is Paraneoplastic antigen Ma6E.